Reading from the N-terminus, the 380-residue chain is DNA primase small subunit PriS (380 aa).

Active-site residues include Asp101, Asp103, and Asp282.

This sequence belongs to the eukaryotic-type primase small subunit family. In terms of assembly, heterodimer of a small subunit (PriS) and a large subunit (PriL). It depends on Mg(2+) as a cofactor. The cofactor is Mn(2+).

Catalytic subunit of DNA primase, an RNA polymerase that catalyzes the synthesis of short RNA molecules used as primers for DNA polymerase during DNA replication. The small subunit contains the primase catalytic core and has DNA synthesis activity on its own. Binding to the large subunit stabilizes and modulates the activity, increasing the rate of DNA synthesis while decreasing the length of the DNA fragments, and conferring RNA synthesis capability. The DNA polymerase activity may enable DNA primase to also catalyze primer extension after primer synthesis. May also play a role in DNA repair. The sequence is that of DNA primase small subunit PriS from Hyperthermus butylicus (strain DSM 5456 / JCM 9403 / PLM1-5).